A 261-amino-acid polypeptide reads, in one-letter code: Claudin-18 (261 aa).

The Cytoplasmic segment spans residues 1-6; sequence MSTTTC. The helical transmembrane segment at 7–27 threads the bilayer; it reads QVVAFLLSILGLAGCIAATGM. Over 28-80 the chain is Extracellular; it reads DMWSTQDLYDNPVTSVFQYEGLWRSCVRQSSGFTECRPYFTILGLPAMLQAVR. The helical transmembrane segment at 81–101 threads the bilayer; it reads ALMIVGIVLGAIGLLVSIFAL. Topologically, residues 102 to 122 are cytoplasmic; it reads KCIRIGSMEDSAKANMTLTSG. A helical transmembrane segment spans residues 123 to 143; it reads IMFIVSGLCAIAGVSVFANML. The Extracellular portion of the chain corresponds to 144–174; it reads VTNFWMSTANMYTGMGGMVQTVQTRYTFGAA. A helical membrane pass occupies residues 175 to 195; sequence LFVGWVAGGLTLIGGVMMCIA. The segment at 195 to 261 is required for role in regulation of RANKL-induced osteoclast differentiation; that stretch reads ACRGLAPEET…QSYPSKHDYV (67 aa). Residues 196–261 are Cytoplasmic-facing; the sequence is CRGLAPEETN…QSYPSKHDYV (66 aa). The residue at position 214 (serine 214) is a Phosphoserine. The disordered stretch occupies residues 242–261; the sequence is DGGARTEDEVQSYPSKHDYV.

The protein belongs to the claudin family. In terms of assembly, interacts with TJP2/ZO-2. Interacts with TJP1/ZO-1. Interacts with YAP1 (phosphorylated); the interaction sequesters YAP1 away from the nucleus and thereby restricts transcription of YAP1 target genes. Interacts with CLDN19. Expression is restricted to the lung. As to expression, expression is restricted to the stomach mucosa where it is predominantly observed in the epithelial cells of the pit region and the base of the gastric glands including exocrine and endocrine cells (at protein level).

It localises to the cell junction. The protein resides in the tight junction. The protein localises to the cell membrane. It is found in the lateral cell membrane. Functionally, involved in alveolar fluid homeostasis via regulation of alveolar epithelial tight junction composition and therefore ion transport and solute permeability, potentially via downstream regulation of the actin cytoskeleton organization and beta-2-adrenergic signaling. Required for lung alveolarization and maintenance of the paracellular alveolar epithelial barrier. Acts to maintain epithelial progenitor cell proliferation and organ size, via regulation of YAP1 localization away from the nucleus and thereby restriction of YAP1 target gene transcription. Acts as a negative regulator of RANKL-induced osteoclast differentiation, potentially via relocation of TJP2/ZO-2 away from the nucleus, subsequently involved in bone resorption in response to calcium deficiency. Mediates the osteoprotective effects of estrogen, potentially via acting downstream of estrogen signaling independently of RANKL signaling pathways. In terms of biological role, involved in the maintenance of homeostasis of the alveolar microenvironment via regulation of pH and subsequent T-cell activation in the alveolar space, is therefore indirectly involved in limiting C.neoformans infection. Its function is as follows. Required for the formation of the gastric paracellular barrier via its role in tight junction formation, thereby involved in the response to gastric acidification. This is Claudin-18 (CLDN18) from Homo sapiens (Human).